The following is a 164-amino-acid chain: Monothiol glutaredoxin-S10 (164 aa).

A Glutaredoxin domain is found at 60-161 (EDSVKRTLAD…TMLSELDIDV (102 aa)). Cysteine 80 contacts [2Fe-2S] cluster.

Belongs to the glutaredoxin family. CPYC subfamily.

The protein localises to the cytoplasm. Functionally, may only reduce GSH-thiol disulfides, but not protein disulfides. This chain is Monothiol glutaredoxin-S10 (GRXS10), found in Oryza sativa subsp. japonica (Rice).